A 339-amino-acid chain; its full sequence is Proto-oncogene serine/threonine-protein kinase mos (339 aa).

A Protein kinase domain is found at 61-335 (VCLLHRLGSG…LLQKDLKAFR (275 aa)). Residues 67–75 (LGSGGFGSV) and K88 contribute to the ATP site. Catalysis depends on D196, which acts as the Proton acceptor.

Belongs to the protein kinase superfamily. Ser/Thr protein kinase family. As to quaternary structure, interacts with MAP2K1/MEK1. In terms of tissue distribution, expressed mainly in gonadal tissues, and cardiac and skeletal muscles.

It is found in the cytoplasm. The catalysed reaction is L-seryl-[protein] + ATP = O-phospho-L-seryl-[protein] + ADP + H(+). The enzyme catalyses L-threonyl-[protein] + ATP = O-phospho-L-threonyl-[protein] + ADP + H(+). Serine/threonine kinase involved in the regulation of MAPK signaling. Is an activator of the ERK1/2 signaling cascade playing an essential role in the stimulation of oocyte maturation. The polypeptide is Proto-oncogene serine/threonine-protein kinase mos (Rattus norvegicus (Rat)).